We begin with the raw amino-acid sequence, 428 residues long: MPGIVLIGAQWGDEGKGKATDLIGTKVDYVARFNGGNNAGHSVVVGDESYALHLLPSGIINPNLTPVIGNGVVVDPEVLFEEIDGLESRGIDCSHLKVSEAAHIIAPYHRTLDKVTERFLGKHKIGTTGRGIGPAYADKINRVGIRVHDLFNADHLHDKVEASLHQKNQMLVKLYNRRPIDVDQTTEELLKLGERLKPYVANTGLILNKALDEGKTVLFEGAQATMLDVDHGTYPFVTSSNPTAGGACTGTGVGPTKITRVIGVSKAYVTRVGEGPFPTELLDESGEWLRQQGHEFGVTTGRPRRCGWFDAVVNRYASQVNGLTDIVLTKLDVLTGLKEIPICVAYDVDGERHDDMPTDQAAFAAAKPIYETMPGWDEDISDCHSFDELPATCQAYVKRLEELSGCRISVIGTGPQRDHVIQINSLVD.

Residues 12–18 (GDEGKGK) and 40–42 (GHS) contribute to the GTP site. Aspartate 13 serves as the catalytic Proton acceptor. Residues aspartate 13 and glycine 40 each contribute to the Mg(2+) site. Residues 13–16 (DEGK), 38–41 (NAGH), threonine 128, arginine 142, glutamine 223, threonine 238, and arginine 302 contribute to the IMP site. The active-site Proton donor is the histidine 41. 298–304 (VTTGRPR) contacts substrate. GTP contacts are provided by residues arginine 304, 330 to 332 (KLD), and 412 to 414 (GTG).

The protein belongs to the adenylosuccinate synthetase family. As to quaternary structure, homodimer. Mg(2+) is required as a cofactor.

It is found in the cytoplasm. The enzyme catalyses IMP + L-aspartate + GTP = N(6)-(1,2-dicarboxyethyl)-AMP + GDP + phosphate + 2 H(+). It functions in the pathway purine metabolism; AMP biosynthesis via de novo pathway; AMP from IMP: step 1/2. In terms of biological role, plays an important role in the de novo pathway of purine nucleotide biosynthesis. Catalyzes the first committed step in the biosynthesis of AMP from IMP. The chain is Adenylosuccinate synthetase from Bifidobacterium longum subsp. infantis (strain ATCC 15697 / DSM 20088 / JCM 1222 / NCTC 11817 / S12).